A 142-amino-acid polypeptide reads, in one-letter code: Profilin (142 aa).

The protein belongs to the profilin family. As to quaternary structure, occurs in many kinds of cells as a complex with monomeric actin in a 1:1 ratio. Expressed specifically in coelomocytes in response to injury.

Its subcellular location is the cytoplasm. It localises to the cytoskeleton. Functionally, binds to actin and affects the structure of the cytoskeleton. At high concentrations, profilin prevents the polymerization of actin, whereas it enhances it at low concentrations. By binding to PIP2, it inhibits the formation of IP3 and DG. The chain is Profilin from Strongylocentrotus purpuratus (Purple sea urchin).